The chain runs to 96 residues: Co-chaperonin GroES (96 aa).

The protein belongs to the GroES chaperonin family. As to quaternary structure, heptamer of 7 subunits arranged in a ring. Interacts with the chaperonin GroEL.

The protein resides in the cytoplasm. In terms of biological role, together with the chaperonin GroEL, plays an essential role in assisting protein folding. The GroEL-GroES system forms a nano-cage that allows encapsulation of the non-native substrate proteins and provides a physical environment optimized to promote and accelerate protein folding. GroES binds to the apical surface of the GroEL ring, thereby capping the opening of the GroEL channel. The sequence is that of Co-chaperonin GroES from Citrifermentans bemidjiense (strain ATCC BAA-1014 / DSM 16622 / JCM 12645 / Bem) (Geobacter bemidjiensis).